Here is a 269-residue protein sequence, read N- to C-terminus: Protein MGF 360-15R (269 aa).

The protein belongs to the asfivirus MGF 360 family.

Its function is as follows. Plays a role in virus cell tropism, and may be required for efficient virus replication in macrophages. The protein is Protein MGF 360-15R of African swine fever virus (isolate Pig/Kenya/KEN-50/1950) (ASFV).